A 95-amino-acid chain; its full sequence is DNA-directed RNA polymerase subunit Rpo11 (95 aa).

This sequence belongs to the archaeal Rpo11/eukaryotic RPB11/RPC19 RNA polymerase subunit family. As to quaternary structure, part of the RNA polymerase complex.

The protein localises to the cytoplasm. It catalyses the reaction RNA(n) + a ribonucleoside 5'-triphosphate = RNA(n+1) + diphosphate. DNA-dependent RNA polymerase (RNAP) catalyzes the transcription of DNA into RNA using the four ribonucleoside triphosphates as substrates. This Thermococcus sibiricus (strain DSM 12597 / MM 739) protein is DNA-directed RNA polymerase subunit Rpo11.